We begin with the raw amino-acid sequence, 306 residues long: Probable cobalamin biosynthesis protein CobD (306 aa).

5 helical membrane-spanning segments follow: residues 54-74 (LFGFLNVVLVLAIVFFMAFEI), 88-108 (ISLYSIILSFSIGHKSLIEFS), 155-175 (ITDSIIAPLIYAAIFGLPGAF), 207-227 (ILNFIPSRIAGMLLIISAPFY), and 286-306 (SLKAVDYSVLLFLIIYMILFM).

Belongs to the CobD/CbiB family.

Its subcellular location is the cell membrane. Its pathway is cofactor biosynthesis; adenosylcobalamin biosynthesis. Functionally, converts cobyric acid to cobinamide by the addition of aminopropanol on the F carboxylic group. The sequence is that of Probable cobalamin biosynthesis protein CobD from Methanococcus maripaludis (strain DSM 14266 / JCM 13030 / NBRC 101832 / S2 / LL).